The primary structure comprises 428 residues: 3-phosphoshikimate 1-carboxyvinyltransferase (428 aa).

Residues lysine 22, serine 23, and arginine 27 each contribute to the 3-phosphoshikimate site. Lysine 22 provides a ligand contact to phosphoenolpyruvate. Phosphoenolpyruvate contacts are provided by glycine 94 and arginine 122. Residues serine 168, serine 169, glutamine 170, serine 196, aspartate 315, and lysine 342 each coordinate 3-phosphoshikimate. Residue glutamine 170 coordinates phosphoenolpyruvate. Residue aspartate 315 is the Proton acceptor of the active site. Positions 346, 389, and 414 each coordinate phosphoenolpyruvate.

It belongs to the EPSP synthase family. In terms of assembly, monomer.

It is found in the cytoplasm. It catalyses the reaction 3-phosphoshikimate + phosphoenolpyruvate = 5-O-(1-carboxyvinyl)-3-phosphoshikimate + phosphate. Its pathway is metabolic intermediate biosynthesis; chorismate biosynthesis; chorismate from D-erythrose 4-phosphate and phosphoenolpyruvate: step 6/7. Its function is as follows. Catalyzes the transfer of the enolpyruvyl moiety of phosphoenolpyruvate (PEP) to the 5-hydroxyl of shikimate-3-phosphate (S3P) to produce enolpyruvyl shikimate-3-phosphate and inorganic phosphate. This Thiobacillus denitrificans (strain ATCC 25259 / T1) protein is 3-phosphoshikimate 1-carboxyvinyltransferase.